A 344-amino-acid polypeptide reads, in one-letter code: Putative [LysW]-lysine/[LysW]-ornithine hydrolase (344 aa).

Histidine 66 is a Zn(2+) binding site. Aspartate 68 is a catalytic residue. Residue aspartate 90 coordinates Zn(2+). Glutamate 117 (proton acceptor) is an active-site residue. Zn(2+) contacts are provided by glutamate 118, glutamate 139, and histidine 297.

It belongs to the peptidase M20A family. LysK subfamily. It depends on Zn(2+) as a cofactor. Requires Co(2+) as cofactor.

It is found in the cytoplasm. It carries out the reaction [amino-group carrier protein]-C-terminal-gamma-(L-lysyl)-L-glutamate + H2O = [amino-group carrier protein]-C-terminal-L-glutamate + L-lysine. It catalyses the reaction [amino-group carrier protein]-C-terminal-gamma-(L-ornithyl)-L-glutamate + H2O = [amino-group carrier protein]-C-terminal-L-glutamate + L-ornithine. It participates in amino-acid biosynthesis; L-lysine biosynthesis via AAA pathway; L-lysine from L-alpha-aminoadipate (Thermus route): step 5/5. The protein operates within amino-acid biosynthesis; L-arginine biosynthesis. Catalyzes the release of L-lysine from [LysW]-gamma-L-lysine and the release of L-ornithine from [LysW]-L-ornithine. This chain is Putative [LysW]-lysine/[LysW]-ornithine hydrolase, found in Thermococcus kodakarensis (strain ATCC BAA-918 / JCM 12380 / KOD1) (Pyrococcus kodakaraensis (strain KOD1)).